Here is a 614-residue protein sequence, read N- to C-terminus: Zinc finger and SCAN domain-containing protein 2 (614 aa).

Disordered stretches follow at residues 1–25, 42–73, and 162–200; these read MAAEVPAVSTPLSPLVQVPQEEDEQ, AVLQEDGPESEPFPQSAGKGSPQEEDAAEGPQ, and NISGGEGGQQSDGDSDFERDCGSGGAQGHAPGEDPRVVP. The 59-residue stretch at 69 to 127 folds into the SCAN box domain; sequence AEGPQGALVRFRELCRRWLRPEVHTKEQMLTVLPREIQAWLQEHRPESSEEAVALVEDL. 14 consecutive C2H2-type zinc fingers follow at residues 222-244, 250-272, 278-300, 306-328, 334-356, 362-384, 390-412, 418-440, 446-468, 474-496, 502-524, 530-552, 558-580, and 586-608; these read YECPQCGKTFSRKSHLITHERTH, YKCDECGKSFSDGSNFSRHQTTH, YKCRDCGKSFSRSANLITHQRIH, FQCAECGKSFSRSPNLIAHQRTH, YSCPECGKSFGNRSSLNTHQGIH, YACKECGESFSYNSNLIRHQRIH, YKCTECGQKFSQSSALITHRRTH, YQCGECGKNFSRSSNLATHRRTH, YKCGLCGKSFSQSSSLIAHQGTH, YECLTCGESFSWSSNLIKHQRTH, YRCGDCGKGFSQRSQLVVHQRTH, YKCLMCGKSFSRGSILVMHQRAH, YRCPECGKGFSWNSVLIIHQRIH, and YRCPECGKGFSNSSNFITHQRTH.

Belongs to the krueppel C2H2-type zinc-finger protein family. As to expression, in the adult, predominantly found in spermatids. Also present in the embryo.

It localises to the nucleus. Functionally, may be involved in transcriptional regulation during the post-meiotic stages of spermatogenesis. This is Zinc finger and SCAN domain-containing protein 2 (Zscan2) from Mus musculus (Mouse).